Consider the following 92-residue polypeptide: Putative regulatory protein CA_C1717 (92 aa).

It belongs to the RemA family.

The protein is Putative regulatory protein CA_C1717 of Clostridium acetobutylicum (strain ATCC 824 / DSM 792 / JCM 1419 / IAM 19013 / LMG 5710 / NBRC 13948 / NRRL B-527 / VKM B-1787 / 2291 / W).